We begin with the raw amino-acid sequence, 548 residues long: Inosine-5'-monophosphate dehydrogenase (548 aa).

2 CBS domains span residues Phe-121–Val-201 and Met-205–Ser-261. Residues Asp-298 to Ser-300 and Gly-348 to Gly-350 each bind NAD(+). 2 residues coordinate K(+): Gly-350 and Gly-352. Ser-353 is a binding site for IMP. Residue Cys-355 coordinates K(+). Cys-355 serves as the catalytic Thioimidate intermediate. Residues Asp-388–Gly-390 and Gly-411–Ser-412 each bind IMP. Residue Arg-461 is the Proton acceptor of the active site. Gln-473 is an IMP binding site. The segment at Ala-527 to Ser-548 is disordered. Position 528 (Ser-528) interacts with K(+). Residues His-539–Ser-548 are compositionally biased toward basic and acidic residues.

Belongs to the IMPDH/GMPR family. As to quaternary structure, homotetramer. The cofactor is K(+).

The protein localises to the cytoplasm. The catalysed reaction is IMP + NAD(+) + H2O = XMP + NADH + H(+). It participates in purine metabolism; XMP biosynthesis via de novo pathway; XMP from IMP: step 1/1. With respect to regulation, mycophenolic acid (MPA) is a non-competitive inhibitor that prevents formation of the closed enzyme conformation by binding to the same site as the amobile flap. In contrast, mizoribine monophosphate (MZP) is a competitive inhibitor that induces the closed conformation. MPA is a potent inhibitor of mammalian IMPDHs but a poor inhibitor of the bacterial enzymes. MZP is a more potent inhibitor of bacterial IMPDH. Functionally, catalyzes the conversion of inosine 5'-phosphate (IMP) to xanthosine 5'-phosphate (XMP), the first committed and rate-limiting step in the de novo synthesis of guanine nucleotides, and therefore plays an important role in the regulation of cell growth. Part of the gene cluster that mediates the biosynthesis of mycophenolic acid (MPA), the first isolated antibiotic natural product in the world. Does not play a role in the biosynthesis of MPA, but is involved in self resistance to MPA, since MPA acts as an inhibitor of IMP dehydrogenases. The chain is Inosine-5'-monophosphate dehydrogenase from Penicillium brevicompactum.